A 291-amino-acid chain; its full sequence is 4-hydroxy-tetrahydrodipicolinate synthase (291 aa).

Pyruvate is bound at residue Thr45. Catalysis depends on Tyr133, which acts as the Proton donor/acceptor. The Schiff-base intermediate with substrate role is filled by Lys161. Ile203 provides a ligand contact to pyruvate.

Belongs to the DapA family. As to quaternary structure, homotetramer; dimer of dimers.

The protein localises to the cytoplasm. The catalysed reaction is L-aspartate 4-semialdehyde + pyruvate = (2S,4S)-4-hydroxy-2,3,4,5-tetrahydrodipicolinate + H2O + H(+). The protein operates within amino-acid biosynthesis; L-lysine biosynthesis via DAP pathway; (S)-tetrahydrodipicolinate from L-aspartate: step 3/4. Its function is as follows. Catalyzes the condensation of (S)-aspartate-beta-semialdehyde [(S)-ASA] and pyruvate to 4-hydroxy-tetrahydrodipicolinate (HTPA). In Saccharophagus degradans (strain 2-40 / ATCC 43961 / DSM 17024), this protein is 4-hydroxy-tetrahydrodipicolinate synthase.